The following is a 1351-amino-acid chain: Bromodomain-containing protein 4A (1351 aa).

Disordered stretches follow at residues 1 to 23 (MSSE…GIEG), 35 to 58 (PQPQ…QPKR), 168 to 244 (ETEL…RPPA), 285 to 368 (AAQP…DTKT), 478 to 638 (EPEE…PMSY), 700 to 799 (CLRK…LDSS), and 821 to 1334 (PDLP…PSID). In terms of domain architecture, Bromo 1 spans 58–164 (RQTNQLQYLL…KLFLQKISEM (107 aa)). Low complexity predominate over residues 208 to 219 (VKPPVTPVSKPS). The span at 220–235 (TPTPPTVTRAPTPPQT) shows a compositional bias: pro residues. Over residues 327-343 (PRKENGRQIRPTKKTEV) the composition is skewed to basic and acidic residues. Residues 349 to 359 (PAPPVLHPQPA) are compositionally biased toward pro residues. The Bromo 2 domain maps to 366-475 (TKTSEQLRYC…DVFEMRFAKM (110 aa)). Over residues 482–504 (APAPVPSLAPGPPAPSIKGPPPT) the composition is skewed to pro residues. The interval 504-522 (TSSDSSSDSTSDSESSSDS) is NPS region. Residues 505–517 (SSDSSSDSTSDSE) show a composition bias toward low complexity. Positions 543-598 (QLAALSQPQPNKPKKKEREKRKEKHKRKEEVEEPRKGRIREPPAKKPKKSVQGSGG) are BID region. Residues 554 to 569 (KPKKKEREKRKEKHKR) are compositionally biased toward basic residues. A compositionally biased stretch (basic and acidic residues) spans 570–586 (KEEVEEPRKGRIREPPA). The segment covering 607–621 (PPPAPRPARPAPPSA) has biased composition (pro residues). The region spanning 624-708 (ESSEEETQRC…SCLRKKRKSQ (85 aa)) is the NET domain. Residues 629-638 (ETQRCRPMSY) are compositionally biased toward basic and acidic residues. Residues 725 to 738 (SSSESESSSESSTS) are compositionally biased toward low complexity. Basic residues predominate over residues 751–767 (QKKKGHSGRESRKHHHP). Over residues 788-799 (PSYPLPSSLDSS) the composition is skewed to low complexity. A compositionally biased stretch (pro residues) spans 872–890 (PAMPPSASPPPPAPQPPQQ). Residues 892-902 (HVHHHHHHHAQ) show a composition bias toward basic residues. Over residues 927 to 953 (LQKSQQPPTQSPIHSLLTSVKVQSQTP) the composition is skewed to polar residues. Pro residues predominate over residues 968 to 983 (VYPPPPSTATTAPPPA). 2 stretches are compositionally biased toward low complexity: residues 994–1003 (PVVPQQLPAG) and 1011–1028 (QQQQ…SHQQ). Positions 1051-1350 (RQQKQETYPG…LMEIFEQNLF (300 aa)) are C-terminal (CTD) region. Residues 1075 to 1089 (PPVPPYPGLTHPPSP) show a composition bias toward pro residues. Basic and acidic residues-rich tracts occupy residues 1150-1161 (PRPDLKKMDGGR) and 1176-1197 (PEKE…DIKI). Residues 1214–1224 (PTSAGKSTSDS) show a composition bias toward polar residues. Over residues 1226–1284 (ELFRRQAREKEERERALKLQAEQAERVRREQDRMSRTREDDEVQDQARKAHEEARRRQE) the composition is skewed to basic and acidic residues. Positions 1301–1310 (SPAQSSQPMM) are enriched in low complexity. The span at 1311 to 1323 (DQREMARKREQER) shows a compositional bias: basic and acidic residues.

It belongs to the BET family.

The protein resides in the nucleus. It localises to the chromosome. Chromatin reader protein that recognizes and binds acetylated histones and plays a key role in transmission of epigenetic memory across cell divisions and transcription regulation. Remains associated with acetylated chromatin throughout the entire cell cycle and provides epigenetic memory for postmitotic G1 gene transcription by preserving acetylated chromatin status and maintaining high-order chromatin structure. During interphase, plays a key role in regulating the transcription of signal-inducible genes by associating with the P-TEFb complex and recruiting it to promoters. This is Bromodomain-containing protein 4A (brd4-a) from Xenopus laevis (African clawed frog).